Reading from the N-terminus, the 525-residue chain is Chromosomal replication initiator protein DnaA (525 aa).

The interval 1–71 is domain I, interacts with DnaA modulators; sequence MNDFWQHCSA…SDLARDFWNA (71 aa). Positions 71 to 188 are domain II; sequence APIEVQFVLD…GEADSMYERS (118 aa). Residues 160–182 form a disordered region; that stretch reads AAAGRRTWRPGPGAAPANGGEAD. A compositionally biased stretch (low complexity) spans 169-181; it reads PGPGAAPANGGEA. Residues 189–405 are domain III, AAA+ region; sequence KLNPVLTFDN…GALRKILAYS (217 aa). Residues Gly-233, Gly-235, Lys-236, and Thr-237 each contribute to the ATP site. Residues 406–525 form a domain IV, binds dsDNA region; it reads KFHGREISIE…LHVLEQTLKG (120 aa).

The protein belongs to the DnaA family. Oligomerizes as a right-handed, spiral filament on DNA at oriC.

It is found in the cytoplasm. Functionally, plays an essential role in the initiation and regulation of chromosomal replication. ATP-DnaA binds to the origin of replication (oriC) to initiate formation of the DNA replication initiation complex once per cell cycle. Binds the DnaA box (a 9 base pair repeat at the origin) and separates the double-stranded (ds)DNA. Forms a right-handed helical filament on oriC DNA; dsDNA binds to the exterior of the filament while single-stranded (ss)DNA is stabiized in the filament's interior. The ATP-DnaA-oriC complex binds and stabilizes one strand of the AT-rich DNA unwinding element (DUE), permitting loading of DNA polymerase. After initiation quickly degrades to an ADP-DnaA complex that is not apt for DNA replication. Binds acidic phospholipids. The sequence is that of Chromosomal replication initiator protein DnaA from Burkholderia ambifaria (strain ATCC BAA-244 / DSM 16087 / CCUG 44356 / LMG 19182 / AMMD) (Burkholderia cepacia (strain AMMD)).